We begin with the raw amino-acid sequence, 233 residues long: Ribose-5-phosphate isomerase A (233 aa).

Residues 28–31, 85–88, and 98–101 contribute to the substrate site; these read TGST, DGAD, and KGLG. E107 (proton acceptor) is an active-site residue. Position 125 (K125) interacts with substrate.

Belongs to the ribose 5-phosphate isomerase family. As to quaternary structure, homodimer.

The enzyme catalyses aldehydo-D-ribose 5-phosphate = D-ribulose 5-phosphate. It functions in the pathway carbohydrate degradation; pentose phosphate pathway; D-ribose 5-phosphate from D-ribulose 5-phosphate (non-oxidative stage): step 1/1. Its function is as follows. Catalyzes the reversible conversion of ribose-5-phosphate to ribulose 5-phosphate. The polypeptide is Ribose-5-phosphate isomerase A (Roseiflexus sp. (strain RS-1)).